The following is a 583-amino-acid chain: Transmembrane protein 108 (583 aa).

The chain crosses the membrane as a helical span at residues alanine 7–phenylalanine 27. The interval glutamate 31 to proline 176 is interacts with SH3GL2. Disordered stretches follow at residues valine 71 to alanine 360 and valine 376 to serine 404. Composition is skewed to polar residues over residues proline 80 to proline 93 and proline 100 to threonine 122. The segment covering glycine 177 to proline 187 has biased composition (low complexity). An interacts with DST (isoform 1) region spans residues arginine 180–threonine 413. Polar residues-rich tracts occupy residues tyrosine 251–proline 273, alanine 310–arginine 319, and aspartate 333–glycine 357. Residues isoleucine 477–valine 497 traverse the membrane as a helical segment. The segment at cysteine 498–isoleucine 583 is interaction with CYFIP2.

As to quaternary structure, interacts with DST (isoform 1). Interacts with SH3GL2. Interacts (via N-terminus) with CYFIP1 and CYFIP2; the interactions associate TMEM108 with the WAVE1 complex. Glycosylated.

Its subcellular location is the membrane. The protein resides in the postsynaptic density. It is found in the endosome membrane. The protein localises to the cell projection. It localises to the axon. Its subcellular location is the dendrite. The protein resides in the early endosome. Its function is as follows. Transmembrane protein required for proper cognitive functions. Involved in the development of dentate gyrus (DG) neuron circuitry, is necessary for AMPA receptors surface expression and proper excitatory postsynaptic currents of DG granule neurons. Regulates the organization and stability of the microtubule network of sensory neurons to allow axonal transport. Through the interaction with DST, mediates the docking of the dynein/dynactin motor complex to vesicle cargos for retrograde axonal transport. In hippocampal neurons, required for BDNF-dependent dendrite outgrowth. Cooperates with SH3GL2 and recruits the WAVE1 complex to facilitate actin-dependent BDNF:NTRK2 early endocytic trafficking and mediate signaling from early endosomes. The sequence is that of Transmembrane protein 108 from Bos taurus (Bovine).